The chain runs to 1505 residues: Probable RNA-directed RNA polymerase (1505 aa).

Belongs to the totiviridae RNA-directed RNA polymerase family.

The enzyme catalyses RNA(n) + a ribonucleoside 5'-triphosphate = RNA(n+1) + diphosphate. Functionally, RNA-dependent RNA polymerase which replicates the viral genome. Catalyzes the transcription of fully conservative plus-strand genomic RNAs that are extruded from the virion into the cytoplasm where they function as mRNAs for translation of viral proteins and also as substrates for encapsidation to form new virions. Once encapsidated, the positive strand is converted to dsRNA by the RNA-directed RNA polymerase. Displays ssRNA-binding activity. The sequence is that of Probable RNA-directed RNA polymerase (gag-pol) from Saccharomyces cerevisiae virus L-A (ScV-L-A).